A 487-amino-acid chain; its full sequence is NADH-quinone oxidoreductase subunit N (487 aa).

13 helical membrane passes run 7-27, 37-57, 81-101, 112-132, 166-186, 207-227, 237-257, 276-296, 307-327, 329-349, 373-393, 407-427, and 452-472; these read LTLI…ILIT, LVSI…APAL, FAKI…PAFF, PVLV…GDLI, FVLG…VYGF, ALFG…AVPF, GAPT…AVAL, IVIF…IGQT, INNV…GLSA, LTYL…LLML, LAWC…LLGF, DMVL…FYYI, and VLLI…TGWL.

It belongs to the complex I subunit 2 family. In terms of assembly, NDH-1 is composed of 14 different subunits. Subunits NuoA, H, J, K, L, M, N constitute the membrane sector of the complex.

It is found in the cell inner membrane. The catalysed reaction is a quinone + NADH + 5 H(+)(in) = a quinol + NAD(+) + 4 H(+)(out). Functionally, NDH-1 shuttles electrons from NADH, via FMN and iron-sulfur (Fe-S) centers, to quinones in the respiratory chain. The immediate electron acceptor for the enzyme in this species is believed to be ubiquinone. Couples the redox reaction to proton translocation (for every two electrons transferred, four hydrogen ions are translocated across the cytoplasmic membrane), and thus conserves the redox energy in a proton gradient. In Erythrobacter litoralis (strain HTCC2594), this protein is NADH-quinone oxidoreductase subunit N.